A 276-amino-acid chain; its full sequence is Small ribosomal subunit protein uS2 (276 aa).

Residues 251-276 are disordered; it reads AEEAPAAAEEAPAAEPAAEETPAAEA. Residues 252–276 show a composition bias toward low complexity; that stretch reads EEAPAAAEEAPAAEPAAEETPAAEA.

This sequence belongs to the universal ribosomal protein uS2 family.

In Jannaschia sp. (strain CCS1), this protein is Small ribosomal subunit protein uS2.